The sequence spans 209 residues: MAVFKTLTDADMAIFSTGLVAGVDEVGRGPLVGDVVTAAVILDPNRPIAGLNDSKKLTEKRREALFDEICEKALSFHVGRASPAEIDELNILHATMLAMQRAVAGLSLTPELVLVDGNRSPAFNHAGQALTSHSIVKGDGLIASISAASIIAKVTRDREMDALDAAYPQYGFAKHKGYPTKAHFDAIAEHGVFDQYRKSFKPVKALLER.

Positions 18–209 (GLVAGVDEVG…FKPVKALLER (192 aa)) constitute an RNase H type-2 domain. Residues D24, E25, and D116 each contribute to the a divalent metal cation site.

This sequence belongs to the RNase HII family. Mn(2+) serves as cofactor. Mg(2+) is required as a cofactor.

It localises to the cytoplasm. The catalysed reaction is Endonucleolytic cleavage to 5'-phosphomonoester.. In terms of biological role, endonuclease that specifically degrades the RNA of RNA-DNA hybrids. In Shewanella sp. (strain MR-7), this protein is Ribonuclease HII.